Reading from the N-terminus, the 473-residue chain is Photosystem II CP43 reaction center protein (473 aa).

A propeptide spanning residues 1 to 14 (MKTLYSLRRFYPVE) is cleaved from the precursor. The residue at position 15 (T15) is an N-acetylthreonine. T15 carries the phosphothreonine modification. The next 5 membrane-spanning stretches (helical) occupy residues 69–93 (LFEVAHFVPEKPMYEQGLILLPHLA), 134–155 (LLGPETLEESFPFFGYVWKDRN), 178–200 (KALYFGGVYDTWAPGGGDVRKIT), 255–275 (KPFAWARRAFVWSGEAYLSYS), and 291–312 (WFNNTAYPSEFYGPTGPEASQA). A [CaMn4O5] cluster-binding site is contributed by E367. Residues 447-471 (RARAAAAGFEKGIDRDFEPVLSMTP) form a helical membrane-spanning segment.

Belongs to the PsbB/PsbC family. PsbC subfamily. PSII is composed of 1 copy each of membrane proteins PsbA, PsbB, PsbC, PsbD, PsbE, PsbF, PsbH, PsbI, PsbJ, PsbK, PsbL, PsbM, PsbT, PsbX, PsbY, PsbZ, Psb30/Ycf12, at least 3 peripheral proteins of the oxygen-evolving complex and a large number of cofactors. It forms dimeric complexes. The cofactor is Binds multiple chlorophylls and provides some of the ligands for the Ca-4Mn-5O cluster of the oxygen-evolving complex. It may also provide a ligand for a Cl- that is required for oxygen evolution. PSII binds additional chlorophylls, carotenoids and specific lipids..

The protein localises to the plastid. The protein resides in the chloroplast thylakoid membrane. Its function is as follows. One of the components of the core complex of photosystem II (PSII). It binds chlorophyll and helps catalyze the primary light-induced photochemical processes of PSII. PSII is a light-driven water:plastoquinone oxidoreductase, using light energy to abstract electrons from H(2)O, generating O(2) and a proton gradient subsequently used for ATP formation. The sequence is that of Photosystem II CP43 reaction center protein from Calycanthus floridus var. glaucus (Eastern sweetshrub).